Reading from the N-terminus, the 218-residue chain is ATP-dependent dethiobiotin synthetase BioD (218 aa).

10–15 (NAGKTT) contributes to the ATP binding site. T14 is a Mg(2+) binding site. K35 is an active-site residue. Residue T39 coordinates substrate. Mg(2+)-binding residues include H52 and E116. ATP-binding positions include 116 to 119 (EGAG) and 176 to 177 (LR).

The protein belongs to the dethiobiotin synthetase family. As to quaternary structure, homodimer. Mg(2+) is required as a cofactor.

The protein resides in the cytoplasm. It catalyses the reaction (7R,8S)-7,8-diammoniononanoate + CO2 + ATP = (4R,5S)-dethiobiotin + ADP + phosphate + 3 H(+). It functions in the pathway cofactor biosynthesis; biotin biosynthesis; biotin from 7,8-diaminononanoate: step 1/2. Its function is as follows. Catalyzes a mechanistically unusual reaction, the ATP-dependent insertion of CO2 between the N7 and N8 nitrogen atoms of 7,8-diaminopelargonic acid (DAPA, also called 7,8-diammoniononanoate) to form a ureido ring. This chain is ATP-dependent dethiobiotin synthetase BioD, found in Helicobacter pylori (strain Shi470).